Reading from the N-terminus, the 312-residue chain is Glycerol 2-dehydrogenase (NADP(+)) (312 aa).

Catalysis depends on Y56, which acts as the Proton donor. H112 contacts substrate. 220-274 is an NADP(+) binding site; that stretch reads SPLGSTDAPLLKEPVILEIAKKNNVQPGHVVISWHVQRGYVVLPKSVNPDRIKTN. Position 306 is a phosphoserine (S306).

It belongs to the aldo/keto reductase family.

Its subcellular location is the cytoplasm. It carries out the reaction glycerol + NADP(+) = dihydroxyacetone + NADPH + H(+). Glycerol dehydrogenase involved in glycerol catabolism under microaerobic conditions. Has mRNA binding activity. The protein is Glycerol 2-dehydrogenase (NADP(+)) (GCY1) of Saccharomyces cerevisiae (strain ATCC 204508 / S288c) (Baker's yeast).